The sequence spans 223 residues: Putative HTLV-1-related endogenous sequence (223 aa).

Positions 1-19 are enriched in low complexity; the sequence is MRCAHAPAPRTRYPTRAPS. The disordered stretch occupies residues 1 to 184; it reads MRCAHAPAPR…ARAHGEAGAG (184 aa). Residues 115 to 126 are compositionally biased toward basic and acidic residues; sequence GDRRREGPDRSP. The span at 133–157 shows a compositional bias: low complexity; sequence PAAAAQPDSSSAQAPGPSTLRPAAT.

The protein is Putative HTLV-1-related endogenous sequence (HRES1) of Homo sapiens (Human).